We begin with the raw amino-acid sequence, 173 residues long: Translation initiation factor IF-3 (173 aa).

Belongs to the IF-3 family. Monomer.

It is found in the cytoplasm. Its function is as follows. IF-3 binds to the 30S ribosomal subunit and shifts the equilibrium between 70S ribosomes and their 50S and 30S subunits in favor of the free subunits, thus enhancing the availability of 30S subunits on which protein synthesis initiation begins. The polypeptide is Translation initiation factor IF-3 (Bacillus subtilis (strain 168)).